A 1951-amino-acid chain; its full sequence is Sodium channel protein type 3 subunit alpha (1951 aa).

The Cytoplasmic portion of the chain corresponds to 1–128 (MAQALLVPPG…KIAIKILVHS (128 aa)). The disordered stretch occupies residues 28 to 60 (RAAEEKAKKPKKEQDIDDENKPKPNSDLEAGKN). Residues 46–57 (ENKPKPNSDLEA) are compositionally biased toward basic and acidic residues. Residues 110–455 (ILTPLNPVRK…QQMLEQLKKQ (346 aa)) form an I repeat. A helical transmembrane segment spans residues 129-146 (LFSMLIMCTILTNCVFMT). The Extracellular portion of the chain corresponds to 147–152 (LSNPPD). The chain crosses the membrane as a helical span at residues 153–174 (WTKNVEYTFTGIYTFESLIKIL). Residues 175-188 (ARGFCLEDFTFLRD) lie on the Cytoplasmic side of the membrane. The helical transmembrane segment at 189-206 (PWNWLDFSVIVMAYVTEF) threads the bilayer. Over 207-213 (VDLGNVS) the chain is Extracellular. N-linked (GlcNAc...) asparagine glycosylation occurs at asparagine 211. Residues 214 to 235 (ALRTFRVLRALKTISVIPGLKT) form a helical membrane-spanning segment. Residues 236 to 249 (IVGALIQSVKKLSD) are Cytoplasmic-facing. Residues 250–269 (VMILTVFCLSVFALIGLQLF) form a helical membrane-spanning segment. Residues 270–369 (MGNLRNKCSQ…NYGYTSFDTF (100 aa)) are Extracellular-facing. 5 N-linked (GlcNAc...) asparagine glycosylation sites follow: asparagine 290, asparagine 296, asparagine 302, asparagine 307, and asparagine 339. The pore-forming intramembrane region spans 370-386 (SWAFLSLFRLMTQDYWE). The Extracellular segment spans residues 387 to 397 (NLYQLTLRAAG). The chain crosses the membrane as a helical span at residues 398-424 (KTYMIFFVLVIFLGSFYLVNLILAVVA). The Cytoplasmic segment spans residues 425–712 (MAYEEQNQAT…LVNLIVMDPF (288 aa)). Residues serine 484, serine 485, and serine 486 each carry the phosphoserine modification. Disordered stretches follow at residues 493–529 (SKSA…SESE) and 587–633 (VGSE…TEVR). Basic residues predominate over residues 500-509 (RNRRKKRRQR). Basic and acidic residues-rich tracts occupy residues 510–529 (EHLE…SESE) and 596–622 (DEHS…ERRN). An II repeat occupies 693-965 (CCDAWLKVKH…QIAVGRMQKG (273 aa)). The chain crosses the membrane as a helical span at residues 713–730 (VDLAITICIVLNTLFMAM). Residues 731–738 (EHYPMTQQ) lie on the Extracellular side of the membrane. Residues 739–763 (FSSVLTVGNLVFTGIFTAEMVLKII) traverse the membrane as a helical segment. Residues 764-773 (AMDPYYYFQE) are Cytoplasmic-facing. Residues 774-793 (GWNIFDGIIVSLSLMELGLA) form a helical membrane-spanning segment. The Extracellular portion of the chain corresponds to 794 to 797 (NVEG). Residues 798–816 (LSVLRSFRLLRVFKLAKSW) form a helical membrane-spanning segment. At 817-834 (PTLNMLIKIIGNSVGALG) the chain is on the cytoplasmic side. The chain crosses the membrane as a helical span at residues 835–855 (NLTLVLAIIVFIFAVVGMQLF). Topologically, residues 856–880 (GKSYKECVCKINVDCKLPRWHMNDF) are extracellular. An intrachain disulfide couples cysteine 864 to cysteine 870. Residues 881–896 (FHSFLIVFRVLCGEWI) constitute an intramembrane region (pore-forming). At 897 to 907 (ETMWDCMEVAG) the chain is on the extracellular side. A disulfide bond links cysteine 902 and cysteine 911. The chain crosses the membrane as a helical span at residues 908–934 (QTMCLIVFMLVMVIGNLVVLNLFLALL). Topologically, residues 935–1156 (LSSFSSDNLA…RKTCYSIVEH (222 aa)) are cytoplasmic. The disordered stretch occupies residues 1068–1112 (TEEFSSESELEESKEKLNATSSSEGSTVDVAPPREGEQAEIEPEE). Residues 1139-1450 (KGKIWWNLRK…KKYYNAMKKL (312 aa)) form an III repeat. A helical transmembrane segment spans residues 1157-1177 (NWFETFIVFMILLSSGALAFE). The Extracellular segment spans residues 1178-1189 (DIYIEQRKTIKT). The chain crosses the membrane as a helical span at residues 1190 to 1211 (MLEYADKVFTYIFILEMLLKWV). Residues 1212–1217 (AYGFQT) are Cytoplasmic-facing. The chain crosses the membrane as a helical span at residues 1218–1243 (YFTNAWCWLDFLIVDVSLVSLVANAL). At 1244 to 1252 (GYSELGAIK) the chain is on the extracellular side. The chain crosses the membrane as a helical span at residues 1253–1271 (SLRTLRALRPLRALSRFEG). Topologically, residues 1272 to 1284 (MRVVVNALVGAIP) are cytoplasmic. The chain crosses the membrane as a helical span at residues 1285-1307 (SIMNVLLVCLIFWLIFSIMGVNL). Topologically, residues 1308–1353 (FAGKFYHCVNTTTGNMFEIKEVNNFSDCQALGKQARWKNVKVNFDN) are extracellular. A disulfide bridge links cysteine 1315 with cysteine 1335. Residues asparagine 1317 and asparagine 1331 are each glycosylated (N-linked (GlcNAc...) asparagine). Positions 1354–1370 (VGAGYLALLQVATFKGW) form an intramembrane region, pore-forming. Residues 1371 to 1393 (MDIMYAAVDSRDVKLQPIYEENL) are Extracellular-facing. The helical transmembrane segment at 1394–1419 (YMYLYFVIFIIFGSFFTLNLFIGVII) threads the bilayer. The Cytoplasmic segment spans residues 1420 to 1477 (DNFNQQKKKFGGQDIFMTEEQKKYYNAMKKLGSKKPQKPIPRPANKFQGMVFDFVTRQ). Position 1452 is a phosphoserine; by PKC (serine 1452). An IV repeat occupies 1459–1757 (IPRPANKFQG…WEKFDPDATQ (299 aa)). Residues 1478–1496 (VFDISIMILICLNMVTMMV) form a helical membrane-spanning segment. At 1497–1504 (ETDDQSKY) the chain is on the extracellular side. A helical transmembrane segment spans residues 1505–1528 (MTLVLSRINLVFIVLFTGEFLLKL). The Cytoplasmic segment spans residues 1529–1538 (ISLRYYYFTI). The helical transmembrane segment at 1539–1556 (GWNIFDFVVVILSIVGMF) threads the bilayer. At 1557 to 1568 (LAELIEKYFVSP) the chain is on the extracellular side. A helical membrane pass occupies residues 1569–1591 (TLFRVIRLARIGRILRLIKGAKG). The Cytoplasmic portion of the chain corresponds to 1592–1604 (IRTLLFALMMSLP). Residues 1605 to 1628 (ALFNIGLLLFLVMFIYAIFGMSNF) traverse the membrane as a helical segment. Residues 1629–1650 (AYVKKEAGIDDMFNFETFGNSM) are Extracellular-facing. The pore-forming intramembrane region spans 1651-1663 (ICLFQITTSAGWD). The Extracellular portion of the chain corresponds to 1664–1695 (GLLAPILNSAPPDCDPDAIHPGSSVKGDCGNP). Residues 1696 to 1721 (SVGIFFFVSYIIISFLVVVNMYIAVI) traverse the membrane as a helical segment. At 1722-1951 (LENFSVATEE…KGKEVRENQK (230 aa)) the chain is on the cytoplasmic side. The region spanning 1851 to 1880 (EEVSAAIIQRNYRCYLLKQRLKNISSKYDK) is the IQ domain. Positions 1898–1951 (DKLNGNSTPEKTDGSSSTTSPPSYDSVTKPDKEKFEKDKPEKEIKGKEVRENQK) are disordered. A compositionally biased stretch (basic and acidic residues) spans 1925-1951 (TKPDKEKFEKDKPEKEIKGKEVRENQK).

It belongs to the sodium channel (TC 1.A.1.10) family. Nav1.3/SCN3A subfamily. In terms of assembly, heterooligomer of an alpha subunit, SCN3A, and 1 to 3 regulatory beta subunits including SCN1B and SCN2B; disulfide-linked with some beta subunits like SCN2B. Interacts with NEDD4L; could regulate expression of SCN3A at the plasma membrane through ubiquitination-regulated endocytosis. Interacts with the conotoxin GVIIJ. Interacts with the spider beta/delta-theraphotoxin-Pre1a. Interacts with the spider RTX-VII toxin (AC P0DL75). In terms of processing, may be ubiquitinated by NEDD4L; which would promote its endocytosis. Post-translationally, phosphorylation at Ser-1452 by PKC in a highly conserved cytoplasmic loop slows inactivation of the sodium channel and reduces peak sodium currents.

The protein resides in the cell membrane. It is found in the basal cell membrane. It catalyses the reaction Na(+)(in) = Na(+)(out). In terms of biological role, pore-forming subunit of Nav1.3, a voltage-gated sodium (Nav) channel that directly mediates the depolarizing phase of action potentials in excitable membranes. Navs, also called VGSCs (voltage-gated sodium channels) or VDSCs (voltage-dependent sodium channels), operate by switching between closed and open conformations depending on the voltage difference across the membrane. In the open conformation they allow Na(+) ions to selectively pass through the pore, along their electrochemical gradient. The influx of Na+ ions provokes membrane depolarization, initiating the propagation of electrical signals throughout cells and tissues. In some secretory cell types, it also participates in cell excitability through membrane depolarization and regulates cells responsiveness to stimuli triggering secretion. For instance, it controls the release of serotonin/5-hydroxytryptamine by enterochromaffin cells and is required for both glucagon- and glucose-induced insulin secretion in pancreatic endocrine cells. This Rattus norvegicus (Rat) protein is Sodium channel protein type 3 subunit alpha.